Consider the following 296-residue polypeptide: ATP synthase gamma chain (296 aa).

Belongs to the ATPase gamma chain family. In terms of assembly, F-type ATPases have 2 components, CF(1) - the catalytic core - and CF(0) - the membrane proton channel. CF(1) has five subunits: alpha(3), beta(3), gamma(1), delta(1), epsilon(1). CF(0) has three main subunits: a, b and c.

The protein resides in the cell inner membrane. Produces ATP from ADP in the presence of a proton gradient across the membrane. The gamma chain is believed to be important in regulating ATPase activity and the flow of protons through the CF(0) complex. The protein is ATP synthase gamma chain of Methylorubrum extorquens (strain PA1) (Methylobacterium extorquens).